The sequence spans 317 residues: Melanocyte-stimulating hormone receptor (317 aa).

The Extracellular portion of the chain corresponds to 1 to 37 (MAVQGSQRRLLGSLNSTPTAIPQLGLAANQTGARCLE). Residue Asn-29 is glycosylated (N-linked (GlcNAc...) asparagine). Residues 38 to 63 (VSISDGLFLSLGLVSLVENALVVATI) traverse the membrane as a helical segment. Residues 64–72 (AKNRNLHSP) are Cytoplasmic-facing. Residues 73 to 93 (MYCFICCLALSDLLVSGSNVL) traverse the membrane as a helical segment. The Extracellular segment spans residues 94–118 (ETAVILLLEAGALVARAAVLQQLDN). A helical membrane pass occupies residues 119–140 (VIDVITCSSMLSSLCFLGAIAV). The Cytoplasmic segment spans residues 141-163 (DRYISIFYALRYHSIVTLPRARR). The helical transmembrane segment at 164 to 183 (AVAAIWVASVVFSTLFIAYY) threads the bilayer. At 184-191 (DHVAVLLC) the chain is on the extracellular side. A helical membrane pass occupies residues 192 to 211 (LVVFFLAMLVLMAVLYVHML). The Cytoplasmic portion of the chain corresponds to 212–240 (ARACQHAQGIARLHKRQRPVHQGFGLKGA). The chain crosses the membrane as a helical span at residues 241-266 (VTLTILLGIFFLCWGPFFLHLTLIVL). Residues 267–279 (CPEHPTCGCIFKN) lie on the Extracellular side of the membrane. The helical transmembrane segment at 280–300 (FNLFLALIICNAIIDPLIYAF) threads the bilayer. At 301-317 (HSQELRRTLKEVLTCSW) the chain is on the cytoplasmic side. Cys-315 carries the S-palmitoyl cysteine lipid modification.

The protein belongs to the G-protein coupled receptor 1 family. In terms of assembly, interacts with MGRN1, but does not undergo MGRN1-mediated ubiquitination; this interaction competes with GNAS-binding and thus inhibits agonist-induced cAMP production. Interacts with OPN3; the interaction results in a decrease in MC1R-mediated cAMP signaling and ultimately a decrease in melanin production in melanocytes. In terms of tissue distribution, expressed in melanocytes. Expressed in corticoadrenal tissue.

The protein resides in the cell membrane. In terms of biological role, receptor for MSH (alpha, beta and gamma) and ACTH. The activity of this receptor is mediated by G proteins which activate adenylate cyclase. Mediates melanogenesis, the production of eumelanin (black/brown) and phaeomelanin (red/yellow), via regulation of cAMP signaling in melanocytes. The polypeptide is Melanocyte-stimulating hormone receptor (MC1R) (Homo sapiens (Human)).